A 124-amino-acid chain; its full sequence is Ribosome-binding factor A (124 aa).

Belongs to the RbfA family. In terms of assembly, monomer. Binds 30S ribosomal subunits, but not 50S ribosomal subunits or 70S ribosomes.

It localises to the cytoplasm. In terms of biological role, one of several proteins that assist in the late maturation steps of the functional core of the 30S ribosomal subunit. Associates with free 30S ribosomal subunits (but not with 30S subunits that are part of 70S ribosomes or polysomes). Required for efficient processing of 16S rRNA. May interact with the 5'-terminal helix region of 16S rRNA. The protein is Ribosome-binding factor A of Buchnera aphidicola subsp. Schizaphis graminum (strain Sg).